Consider the following 285-residue polypeptide: Formamidopyrimidine-DNA glycosylase (285 aa).

Proline 2 (schiff-base intermediate with DNA) is an active-site residue. Residue glutamate 3 is the Proton donor of the active site. Lysine 61 acts as the Proton donor; for beta-elimination activity in catalysis. DNA-binding residues include histidine 102, arginine 121, and lysine 163. The segment at 249-283 adopts an FPG-type zinc-finger fold; the sequence is NAYGQAGKPCARCGTPIARETFMNRGSHFCNRCQK. Catalysis depends on arginine 273, which acts as the Proton donor; for delta-elimination activity.

This sequence belongs to the FPG family. As to quaternary structure, monomer. The cofactor is Zn(2+).

It catalyses the reaction Hydrolysis of DNA containing ring-opened 7-methylguanine residues, releasing 2,6-diamino-4-hydroxy-5-(N-methyl)formamidopyrimidine.. It carries out the reaction 2'-deoxyribonucleotide-(2'-deoxyribose 5'-phosphate)-2'-deoxyribonucleotide-DNA = a 3'-end 2'-deoxyribonucleotide-(2,3-dehydro-2,3-deoxyribose 5'-phosphate)-DNA + a 5'-end 5'-phospho-2'-deoxyribonucleoside-DNA + H(+). Functionally, involved in base excision repair of DNA damaged by oxidation or by mutagenic agents. Acts as a DNA glycosylase that recognizes and removes damaged bases. Has a preference for oxidized purines, such as 7,8-dihydro-8-oxoguanine (8-oxoG). Has AP (apurinic/apyrimidinic) lyase activity and introduces nicks in the DNA strand. Cleaves the DNA backbone by beta-delta elimination to generate a single-strand break at the site of the removed base with both 3'- and 5'-phosphates. The chain is Formamidopyrimidine-DNA glycosylase from Corynebacterium efficiens (strain DSM 44549 / YS-314 / AJ 12310 / JCM 11189 / NBRC 100395).